The primary structure comprises 344 residues: Methionine import ATP-binding protein MetN (344 aa).

One can recognise an ABC transporter domain in the interval 2–241 (IEINQVNKVF…PKTELAHDFI (240 aa)). Residue 38–45 (GSSGAGKS) participates in ATP binding.

This sequence belongs to the ABC transporter superfamily. Methionine importer (TC 3.A.1.24) family. The complex is composed of two ATP-binding proteins (MetN), two transmembrane proteins (MetI) and a solute-binding protein (MetQ).

The protein resides in the cell inner membrane. The enzyme catalyses L-methionine(out) + ATP + H2O = L-methionine(in) + ADP + phosphate + H(+). It catalyses the reaction D-methionine(out) + ATP + H2O = D-methionine(in) + ADP + phosphate + H(+). Functionally, part of the ABC transporter complex MetNIQ involved in methionine import. Responsible for energy coupling to the transport system. This is Methionine import ATP-binding protein MetN from Vibrio vulnificus (strain CMCP6).